We begin with the raw amino-acid sequence, 241 residues long: Cysteine-rich secretory protein 3 (241 aa).

The N-terminal stretch at 1–19 (MALMLVLFFLAAVLPPSLL) is a signal peptide. In terms of domain architecture, SCP spans 44–170 (SKHNQLRRKV…PLRYFYVCRY (127 aa)). Asparagine 118, asparagine 132, and asparagine 175 each carry an N-linked (GlcNAc...) asparagine glycan. Disulfide bonds link cysteine 194/cysteine 201, cysteine 197/cysteine 206, cysteine 210/cysteine 241, cysteine 219/cysteine 235, and cysteine 226/cysteine 239. One can recognise a ShKT domain in the interval 210–241 (CQYKDMSFWCKRLEYVCKHPGLKKRCLATCQC).

The protein belongs to the CRISP family. Interacts with A1BG. Interacts with KNG1 isoform LMW. Expressed in submandibular gland.

The protein resides in the cytoplasmic vesicle. Its subcellular location is the secretory vesicle. In terms of biological role, this protein is supposed to help spermatozoa undergo functional maturation while they move from the testis to the ductus deferens. This is Cysteine-rich secretory protein 3 (Crisp3) from Mus musculus (Mouse).